Consider the following 158-residue polypeptide: C-type lectin lectoxin-Thr1 (158 aa).

The first 23 residues, 1–23 (MGRFIFATLGLLLVAFSINGAKG), serve as a signal peptide directing secretion. Disulfide bonds link Cys26–Cys37, Cys54–Cys154, and Cys129–Cys146. Residues 33 to 155 (LKGFCYKVFN…CASTRAYLCK (123 aa)) enclose the C-type lectin domain. A Mannose-binding motif is present at residues 119-121 (EPN). Residues Glu127, Asn142, and Asp143 each coordinate Ca(2+).

This sequence belongs to the true venom lectin family. As to expression, expressed by the venom gland.

Its subcellular location is the secreted. Functionally, mannose-binding lectin which recognizes specific carbohydrate structures and agglutinates a variety of animal cells by binding to cell-surface glycoproteins and glycolipids. May be a calcium-dependent lectin. In Thrasops jacksonii (Jackson's black tree snake), this protein is C-type lectin lectoxin-Thr1.